The chain runs to 590 residues: Arginine--tRNA ligase (590 aa).

Residues 130-140 (PNIAKEMHVGH) carry the 'HIGH' region motif.

It belongs to the class-I aminoacyl-tRNA synthetase family. Monomer.

Its subcellular location is the cytoplasm. It carries out the reaction tRNA(Arg) + L-arginine + ATP = L-arginyl-tRNA(Arg) + AMP + diphosphate. In Synechococcus sp. (strain CC9311), this protein is Arginine--tRNA ligase.